Consider the following 201-residue polypeptide: Small ribosomal subunit protein uS4c (201 aa).

Residues 20–44 (GLTSKRPRAGSDLRNQSRSGKKSQY) are disordered. Positions 89–152 (MRLDNILFRL…NSRTLVQNLL (64 aa)) constitute an S4 RNA-binding domain.

This sequence belongs to the universal ribosomal protein uS4 family. Part of the 30S ribosomal subunit. Contacts protein S5. The interaction surface between S4 and S5 is involved in control of translational fidelity.

The protein resides in the plastid. It is found in the chloroplast. In terms of biological role, one of the primary rRNA binding proteins, it binds directly to 16S rRNA where it nucleates assembly of the body of the 30S subunit. Functionally, with S5 and S12 plays an important role in translational accuracy. This Arabis hirsuta (Hairy rock-cress) protein is Small ribosomal subunit protein uS4c (rps4).